Here is a 362-residue protein sequence, read N- to C-terminus: Phosphoglycolate phosphatase 1B, chloroplastic (362 aa).

A chloroplast-targeting transit peptide spans 1–54 (MLSRSVASAVTPVSSSSLLPNSKPIFCLKTLSGYRSSSFCGGCIRKINHKPLRM). N-acetylthreonine is present on T55. E80 functions as the Nucleophile in the catalytic mechanism. S356 is modified (phosphoserine).

Belongs to the HAD-like hydrolase superfamily. CbbY/CbbZ/Gph/YieH family.

It localises to the plastid. Its subcellular location is the chloroplast. The catalysed reaction is 2-phosphoglycolate + H2O = glycolate + phosphate. Photorespiratory enzyme that dephosphorylates the 2-phosphoglycolate produced by the RuBisCO oxygenation reaction. In Arabidopsis thaliana (Mouse-ear cress), this protein is Phosphoglycolate phosphatase 1B, chloroplastic (PGLP1B).